A 436-amino-acid polypeptide reads, in one-letter code: Protein FAM83A (436 aa).

The tract at residues 1 to 298 (MSRSRHVGKI…LYASSKPLMG (298 aa)) is DUF1669. Positions 73 to 95 (AQAKEPPDAPDSAGGAESGPRGL) are disordered. Phosphoserine occurs at positions 301, 329, 350, and 359. The tract at residues 302–371 (PRLVAPFQPN…APIPPTVPRL (70 aa)) is disordered. A compositionally biased stretch (polar residues) spans 321-349 (LSGTSDSASDRTSSNPFSSLSTGSNAHNQ). Residues 350–359 (SLSTSSGPSS) show a composition bias toward low complexity.

Belongs to the FAM83 family. Directly interacts (via DUF1669) with casein kinase isoforms CSNK1A1, CSNK1A1L, CSNK1D and CSNK1E. Post-translationally, may be phosphorylated upon EGFR activation. In terms of tissue distribution, widely expressed, with relatively higher expression levels in adipose tissues, especially in epididymal and inguinal white adipose tissue (at protein level).

The protein resides in the cytoplasm. It is found in the mitochondrion. Functionally, involved in mitochondrial maintenance during adipogenesis. May be acting by playing a role in the maintenance of normal mitochondrial function. The polypeptide is Protein FAM83A (Mus musculus (Mouse)).